We begin with the raw amino-acid sequence, 132 residues long: D-ribose pyranase (132 aa).

Catalysis depends on His20, which acts as the Proton donor. Residues Asp28, His99, and 121 to 123 contribute to the substrate site; that span reads YSN.

Belongs to the RbsD / FucU family. RbsD subfamily. Homodecamer.

It localises to the cytoplasm. It carries out the reaction beta-D-ribopyranose = beta-D-ribofuranose. Its pathway is carbohydrate metabolism; D-ribose degradation; D-ribose 5-phosphate from beta-D-ribopyranose: step 1/2. Functionally, catalyzes the interconversion of beta-pyran and beta-furan forms of D-ribose. The chain is D-ribose pyranase from Streptococcus agalactiae serotype V (strain ATCC BAA-611 / 2603 V/R).